The sequence spans 488 residues: Photosystem II CP43 reaction center protein (488 aa).

Residues 1 to 29 constitute a propeptide that is removed on maturation; that stretch reads MTKVFALGWLLKINLMKTLYSLRRFYHVE. 5 helical membrane-spanning segments follow: residues 84-108, 149-170, 193-215, 270-290, and 306-327; these read LFEV…PHLA, LIGP…RDKN, KALF…RFVS, KPFA…LSYS, and WYNN…ASQA. Residue E382 coordinates [CaMn4O5] cluster. Residues 462–486 form a helical membrane-spanning segment; sequence RARAAAAGFEKGINRENEPVLSMRP.

The protein belongs to the PsbB/PsbC family. PsbC subfamily. As to quaternary structure, PSII is composed of 1 copy each of membrane proteins PsbA, PsbB, PsbC, PsbD, PsbE, PsbF, PsbH, PsbI, PsbJ, PsbK, PsbL, PsbM, PsbT, PsbX, PsbY, PsbZ, Psb30/Ycf12, at least 3 peripheral proteins of the oxygen-evolving complex and a large number of cofactors. It forms dimeric complexes. Binds multiple chlorophylls and provides some of the ligands for the Ca-4Mn-5O cluster of the oxygen-evolving complex. It may also provide a ligand for a Cl- that is required for oxygen evolution. PSII binds additional chlorophylls, carotenoids and specific lipids. is required as a cofactor.

The protein localises to the plastid. It is found in the chloroplast thylakoid membrane. In terms of biological role, one of the components of the core complex of photosystem II (PSII). It binds chlorophyll and helps catalyze the primary light-induced photochemical processes of PSII. PSII is a light-driven water:plastoquinone oxidoreductase, using light energy to abstract electrons from H(2)O, generating O(2) and a proton gradient subsequently used for ATP formation. In Pyropia yezoensis (Susabi-nori), this protein is Photosystem II CP43 reaction center protein.